The primary structure comprises 631 residues: MYPLGRVSLPVRSPVCLFCQNRTSSLLPSAYVWQSARTMASGRLRRKAARMALSPNVAKTSLKKKRNDTDRFGPFAGMNQTEARIRDDPRSRSPASLKRSKAPSDESGRKDSELYKALKMQTALAPIPYGRRSAIKAKIAEITSFDQFPLLPVVRHSIFSQALPGLHDVTPTPIQRVAIPRLLDDTNKDKKPKKRAEGEPEYDQYLLAAETGSGKTLAYLIPLVNTVKQQEAIEKEEQKREEEEKAKEREEKLKNQAFDVEPELPPLSNAGRPRVIILVPTAELVAQVGAKVKTLSHTIKYRSGMISSNLTPRRIKNTLFNPDGIDILVTTPHLLASIAKTEPYVLSRVSHLVLDEADSLLDRSFQPITTEIIEKTSGSLQKLILCSATIPRSLDNFLRKKYPDIQRLTTPNLHAIPRRVQLGVVDIQKDPYRGNRNLACADVIWSIGKAGDSEPAGPFASYQGPSVKKILVFVNEREEADEVAQFLRSKGIDAHSLSRDSSARRQEEILAEFTEAGAPPSSEEIMLAQKKGRQDDAIPFEAPSKPHEPHKLPNTKVLVTTDIASRGIDTLAVKTVILYHVPHTTIDFIHRLGRLGRMNKRGRGIVLVGKKDRKDVVKEVREGMFRGQALI.

Residues 1 to 39 (MYPLGRVSLPVRSPVCLFCQNRTSSLLPSAYVWQSARTM) constitute a mitochondrion transit peptide. The interval 55-111 (PNVAKTSLKKKRNDTDRFGPFAGMNQTEARIRDDPRSRSPASLKRSKAPSDESGRKD) is disordered. The span at 102–111 (APSDESGRKD) shows a compositional bias: basic and acidic residues. Residues 143–176 (TSFDQFPLLPVVRHSIFSQALPGLHDVTPTPIQR) carry the Q motif motif. Residues 181 to 200 (RLLDDTNKDKKPKKRAEGEP) form a disordered region. Residues 196-408 (AEGEPEYDQY…RKKYPDIQRL (213 aa)) enclose the Helicase ATP-binding domain. An ATP-binding site is contributed by 209–216 (AETGSGKT). The DEAD box signature appears at 355-358 (DEAD). The region spanning 442–631 (DVIWSIGKAG…EGMFRGQALI (190 aa)) is the Helicase C-terminal domain.

The protein belongs to the DEAD box helicase family. MRH4 subfamily.

It is found in the mitochondrion. The catalysed reaction is ATP + H2O = ADP + phosphate + H(+). Functionally, ATP-binding RNA helicase involved in mitochondrial RNA metabolism. Required for maintenance of mitochondrial DNA. This chain is ATP-dependent RNA helicase mrh4, mitochondrial (mrh4), found in Aspergillus terreus (strain NIH 2624 / FGSC A1156).